Here is a 615-residue protein sequence, read N- to C-terminus: Vitamin B12 transporter BtuB (615 aa).

Residues 1 to 20 form the signal peptide; sequence MIKKVSLMTALSVTAFSGWA. The TonB box signature appears at 25 to 32; that stretch reads DSLVVTAN. The TBDR plug domain maps to 37 to 151; the sequence is PANTVLAPTS…IGGVVNIITT (115 aa). Residues Ser84, Asn91, and 109–110 contribute to the cyanocob(III)alamin site; that span reads VT. The 462-residue stretch at 154–615 folds into the TBDR beta-barrel domain; that stretch reads KDGTTLNAGV…EYTLSGSYTF (462 aa). Transmembrane regions (beta stranded) follow at residues 157–164, 168–177, and 183–194; these read TTLNAGVG, YQNYGGSTQQ, and TRVTLAGDYTYT. The Ca(2+) site is built by Asp198, Gln210, Asp212, and Asp214. 2 beta stranded membrane passes run 216-226 and 231-247; these read YMNKTIYGALE and DQWS…NRTA. Tyr248 and Asp249 together coordinate Ca(2+). Ala250 contributes to the cyanocob(III)alamin binding site. Asp262 provides a ligand contact to Ca(2+). 17 beta stranded membrane-spanning segments follow: residues 264-278, 280-297, 310-326, 329-338, 354-370, 372-382, 386-401, 404-418, 435-444, 450-459, 474-491, 495-510, 518-530, 536-551, 559-573, 586-597, and 603-615; these read RQLY…LRFN, GIFH…KDYN, TLDE…NSVD, HGNVGAGVDW, TNLR…QKFG, FTLEGAARSDD, FGRH…WEFI, YRFI…KAPN, ESKQWEGAFE, VSWRVSAYRN, YYNV…TASF, PLTH…ARNA, RRAK…QLDT, DWSL…YDTD, KVKM…LAVS, IANLFDKDYETV, and AGRE…SYTF. Thr310 is a binding site for cyanocob(III)alamin. Arg518 is a binding site for cyanocob(III)alamin. A TonB C-terminal box motif is present at residues 598 to 615; it reads YGYETAGREYTLSGSYTF.

This sequence belongs to the TonB-dependent receptor family. BtuB (TC 1.B.14.3.1) subfamily.

It localises to the cell outer membrane. In terms of biological role, involved in the active translocation of vitamin B12 (cyanocobalamin) across the outer membrane to the periplasmic space. It derives its energy for transport by interacting with the trans-periplasmic membrane protein TonB. This is Vitamin B12 transporter BtuB from Enterobacter sp. (strain 638).